The sequence spans 236 residues: Sugar fermentation stimulation protein homolog (236 aa).

This sequence belongs to the SfsA family.

The chain is Sugar fermentation stimulation protein homolog from Methylobacterium nodulans (strain LMG 21967 / CNCM I-2342 / ORS 2060).